The primary structure comprises 359 residues: tRNA-specific 2-thiouridylase MnmA (359 aa).

ATP contacts are provided by residues Gly-9 to Ser-16 and Met-35. The tract at residues Asn-95–Asp-97 is interaction with target base in tRNA. The active-site Nucleophile is the Cys-100. Residues Cys-100 and Cys-197 are joined by a disulfide bond. Gly-124 contacts ATP. The interaction with tRNA stretch occupies residues Lys-147–Gln-149. Residue Cys-197 is the Cysteine persulfide intermediate of the active site. An interaction with tRNA region spans residues Arg-309–Tyr-310.

This sequence belongs to the MnmA/TRMU family.

The protein resides in the cytoplasm. It carries out the reaction S-sulfanyl-L-cysteinyl-[protein] + uridine(34) in tRNA + AH2 + ATP = 2-thiouridine(34) in tRNA + L-cysteinyl-[protein] + A + AMP + diphosphate + H(+). Functionally, catalyzes the 2-thiolation of uridine at the wobble position (U34) of tRNA, leading to the formation of s(2)U34. The sequence is that of tRNA-specific 2-thiouridylase MnmA from Francisella tularensis subsp. holarctica (strain FTNF002-00 / FTA).